We begin with the raw amino-acid sequence, 181 residues long: Large ribosomal subunit protein uL5 (181 aa).

The protein belongs to the universal ribosomal protein uL5 family. As to quaternary structure, part of the 50S ribosomal subunit; contacts the 5S rRNA and probably tRNA. Forms a bridge to the 30S subunit in the 70S ribosome.

This is one of the proteins that bind and probably mediate the attachment of the 5S RNA into the large ribosomal subunit, where it forms part of the central protuberance. In the 70S ribosome it contacts protein S13 of the 30S subunit (bridge B1b), connecting the 2 subunits; this bridge is implicated in subunit movement. May contact the P site tRNA; the 5S rRNA and some of its associated proteins might help stabilize positioning of ribosome-bound tRNAs. The sequence is that of Large ribosomal subunit protein uL5 from Methanococcus maripaludis (strain C5 / ATCC BAA-1333).